The chain runs to 194 residues: Holliday junction branch migration complex subunit RuvA (194 aa).

The domain I stretch occupies residues 1-64 (MIGRLRGILA…EDSVSLYGFL (64 aa)). Residues 65–140 (REGERRLFRD…RAADFSSGAP (76 aa)) are domain II. Positions 140–144 (PITGQ) are flexible linker. The domain III stretch occupies residues 145–194 (LGPDAVSEATVALQQLGYKPAEAARMAREAGAEGDEVATVIRKALQAALR).

Belongs to the RuvA family. As to quaternary structure, homotetramer. Forms an RuvA(8)-RuvB(12)-Holliday junction (HJ) complex. HJ DNA is sandwiched between 2 RuvA tetramers; dsDNA enters through RuvA and exits via RuvB. An RuvB hexamer assembles on each DNA strand where it exits the tetramer. Each RuvB hexamer is contacted by two RuvA subunits (via domain III) on 2 adjacent RuvB subunits; this complex drives branch migration. In the full resolvosome a probable DNA-RuvA(4)-RuvB(12)-RuvC(2) complex forms which resolves the HJ.

It localises to the cytoplasm. In terms of biological role, the RuvA-RuvB-RuvC complex processes Holliday junction (HJ) DNA during genetic recombination and DNA repair, while the RuvA-RuvB complex plays an important role in the rescue of blocked DNA replication forks via replication fork reversal (RFR). RuvA specifically binds to HJ cruciform DNA, conferring on it an open structure. The RuvB hexamer acts as an ATP-dependent pump, pulling dsDNA into and through the RuvAB complex. HJ branch migration allows RuvC to scan DNA until it finds its consensus sequence, where it cleaves and resolves the cruciform DNA. In Xanthomonas campestris pv. campestris (strain 8004), this protein is Holliday junction branch migration complex subunit RuvA.